The chain runs to 263 residues: Hydroxyacylglutathione hydrolase (263 aa).

Residues His60, His62, Asp64, His65, His120, Asp137, and His175 each coordinate Zn(2+).

The protein belongs to the metallo-beta-lactamase superfamily. Glyoxalase II family. As to quaternary structure, monomer. Zn(2+) serves as cofactor.

The enzyme catalyses an S-(2-hydroxyacyl)glutathione + H2O = a 2-hydroxy carboxylate + glutathione + H(+). It participates in secondary metabolite metabolism; methylglyoxal degradation; (R)-lactate from methylglyoxal: step 2/2. Functionally, thiolesterase that catalyzes the hydrolysis of S-D-lactoyl-glutathione to form glutathione and D-lactic acid. This chain is Hydroxyacylglutathione hydrolase, found in Shewanella pealeana (strain ATCC 700345 / ANG-SQ1).